Consider the following 655-residue polypeptide: Probable glucan endo-1,3-beta-glucosidase btgC (655 aa).

2 disordered regions span residues 1–61 and 89–114; these read MSGD…ATPG and SGVDAFRDTDGGNFPAERGYNAPGSD. Over 1–282 the chain is Cytoplasmic; the sequence is MSGDPRSFSF…PKPGTGSRKR (282 aa). The segment covering 19-33 has biased composition (polar residues); the sequence is DSSQQPLHPTNTMAD. Residues 89 to 98 show a composition bias toward basic and acidic residues; that stretch reads SGVDAFRDTD. The helical; Signal-anchor for type II membrane protein transmembrane segment at 283-303 threads the bilayer; the sequence is GWIVGIILAVVIVGAIVGGAV. Over 304-655 the chain is Extracellular; the sequence is GGTLGNREKE…IPDCGGKTAT (352 aa). The disordered stretch occupies residues 305-338; the sequence is GTLGNREKESPSSSETASGDEKVNGDLGKDSDEI. Residues 323-338 show a composition bias toward basic and acidic residues; it reads GDEKVNGDLGKDSDEI. Residue N426 is glycosylated (N-linked (GlcNAc...) asparagine). E458 acts as the Proton donor in catalysis. Catalysis depends on E557, which acts as the Nucleophile. N-linked (GlcNAc...) asparagine glycosylation is found at N576 and N602.

This sequence belongs to the glycosyl hydrolase 17 family.

It is found in the cell membrane. The enzyme catalyses Hydrolysis of (1-&gt;3)-beta-D-glucosidic linkages in (1-&gt;3)-beta-D-glucans.. Its function is as follows. Glucanases play a role in cell expansion during growth, in cell-cell fusion during mating, and in spore release during sporulation. This enzyme may be involved in beta-glucan degradation. Active on laminarin and lichenan. The polypeptide is Probable glucan endo-1,3-beta-glucosidase btgC (btgC) (Aspergillus terreus (strain NIH 2624 / FGSC A1156)).